A 99-amino-acid chain; its full sequence is MTKSELIARLAERYPHLVAKDTELAVKTILDAMAVSLASGQRIEIRGFGSFDLNYRPPRTGRNPKSGSSVHVPEKFVPHFKAGKELRERVDTSSMLQEA.

Belongs to the bacterial histone-like protein family. As to quaternary structure, heterodimer of an alpha and a beta chain.

Functionally, this protein is one of the two subunits of integration host factor, a specific DNA-binding protein that functions in genetic recombination as well as in transcriptional and translational control. This Laribacter hongkongensis (strain HLHK9) protein is Integration host factor subunit beta.